We begin with the raw amino-acid sequence, 179 residues long: MARLQEFYKEKVVPGLIEKFGYKSVMEVPRITKITLNMGLGEAVADKKIIENAVGDLTKIAGQKPVITKARKAIAGFKIRQGYPIGAMVTLRGQAMYEFLDRFVTVALPRVRDFRGVSGRAFDGRGNYNIGVKEQIIFPEIDYDKIDALRGLNISITTTAKTDDEAKALLASFKFPFRN.

This sequence belongs to the universal ribosomal protein uL5 family. In terms of assembly, part of the 50S ribosomal subunit; part of the 5S rRNA/L5/L18/L25 subcomplex. Contacts the 5S rRNA and the P site tRNA. Forms a bridge to the 30S subunit in the 70S ribosome.

This is one of the proteins that bind and probably mediate the attachment of the 5S RNA into the large ribosomal subunit, where it forms part of the central protuberance. In the 70S ribosome it contacts protein S13 of the 30S subunit (bridge B1b), connecting the 2 subunits; this bridge is implicated in subunit movement. Contacts the P site tRNA; the 5S rRNA and some of its associated proteins might help stabilize positioning of ribosome-bound tRNAs. The sequence is that of Large ribosomal subunit protein uL5 from Paraburkholderia phymatum (strain DSM 17167 / CIP 108236 / LMG 21445 / STM815) (Burkholderia phymatum).